The sequence spans 551 residues: E3 ubiquitin-protein ligase HEL1 (551 aa).

Residues 175-388 (NDFTCIICCD…KNFFQCTMYK (214 aa)) are TRIAD supradomain. Zn(2+)-binding residues include C179, C182, C200, C203, C301, C304, H309, C314, C341, and C344. An RING-type 1 zinc finger spans residues 179–225 (CIICCDKKDTETFALECGHEYCINCYRHYIKDKLHEGNIITCMDCSL). The IBR-type zinc-finger motif lies at 242-314 (SKLMDSSIKS…GFEVHSPADC (73 aa)). Residues 341-370 (CPKCSVNIEKNGGCNHMVCSSCKYEFCWIC) form an RING-type 2; atypical zinc finger. C354 is an active-site residue. Residues C359, C362, C367, C370, H377, and C384 each coordinate Zn(2+).

This sequence belongs to the RBR family. In terms of assembly, interacts with the E2 ubiquitin-conjugating enzyme UBC4 and histones H3 and H4.

It carries out the reaction [E2 ubiquitin-conjugating enzyme]-S-ubiquitinyl-L-cysteine + [acceptor protein]-L-lysine = [E2 ubiquitin-conjugating enzyme]-L-cysteine + [acceptor protein]-N(6)-ubiquitinyl-L-lysine.. The protein operates within protein modification; protein ubiquitination. In terms of biological role, probable ubiquitin-protein ligase involved in the degradation-related ubiquitination of histones. Contributes to the post-translational regulation of histone protein levels by polyubiquitination of excess histones for subsequent degradation. The polypeptide is E3 ubiquitin-protein ligase HEL1 (Saccharomyces cerevisiae (strain ATCC 204508 / S288c) (Baker's yeast)).